The sequence spans 400 residues: MAIEKELLDQLLAGRDPSEVFGKDGLLDDLKKALSERILNAELDDHLDVERLEGGPANRRNGSSKKTVLTGTSKMTLTIPRDRAGTFDPKLIARYQRRFPDFDDKIISMYARGMTVREIQGHLEELYGIDVSPDLISAVTDTVLEAVGEWQNRPLELCYPLVFFDAIRVKIRDEGFVRNKAVYVALAVLADGSKEILGLWIEQTEGAKFWLRVMNELKNRGCQDILIAVVDGLKGFPEAITAVFPQTIVQTCIVHLIRHSLEFVSYKDRRTVVPALRAIYRARDAEAGLKALEAFEEGYWGQKYPAIAQSWRRNWEHVVPFFAFPEGVRRIIYTTNAIEALNSKLRRAVRSRGHFPGDEAAMKLLYLVLNNAAEQWKRAPREWVEAKTQFAVIFGERFFN.

This sequence belongs to the transposase mutator family.

Its function is as follows. Required for the transposition of the insertion element. The protein is Transposase for insertion sequence element ISRM3 of Rhizobium meliloti (strain 1021) (Ensifer meliloti).